The chain runs to 406 residues: 4-hydroxy-3-methylbut-2-en-1-yl diphosphate synthase (ferredoxin) (406 aa).

Positions 315, 318, 349, and 356 each coordinate [4Fe-4S] cluster.

This sequence belongs to the IspG family. It depends on [4Fe-4S] cluster as a cofactor.

The enzyme catalyses (2E)-4-hydroxy-3-methylbut-2-enyl diphosphate + 2 oxidized [2Fe-2S]-[ferredoxin] + H2O = 2-C-methyl-D-erythritol 2,4-cyclic diphosphate + 2 reduced [2Fe-2S]-[ferredoxin] + H(+). Its pathway is isoprenoid biosynthesis; isopentenyl diphosphate biosynthesis via DXP pathway; isopentenyl diphosphate from 1-deoxy-D-xylulose 5-phosphate: step 5/6. Converts 2C-methyl-D-erythritol 2,4-cyclodiphosphate (ME-2,4cPP) into 1-hydroxy-2-methyl-2-(E)-butenyl 4-diphosphate. The polypeptide is 4-hydroxy-3-methylbut-2-en-1-yl diphosphate synthase (ferredoxin) (Rippkaea orientalis (strain PCC 8801 / RF-1) (Cyanothece sp. (strain PCC 8801))).